Reading from the N-terminus, the 358-residue chain is Fructose-bisphosphate aldolase 7, cytosolic (358 aa).

Ser-2 carries the post-translational modification N-acetylserine. A substrate-binding site is contributed by Arg-52. Cys-68 bears the S-glutathionyl cysteine; transient mark. Lys-142 contacts substrate. Position 173 is an S-glutathionyl cysteine; transient; alternate (Cys-173). Cys-173 carries the S-nitrosocysteine; transient; alternate modification. Glu-183 serves as the catalytic Proton acceptor. Catalysis depends on Lys-225, which acts as the Schiff-base intermediate with dihydroxyacetone-P. 266–268 (SGI) serves as a coordination point for substrate.

Belongs to the class I fructose-bisphosphate aldolase family. In terms of assembly, homotetramer. S-glutathionylated at Cys-68 and Cys-173. In terms of processing, S-nitrosylated at Cys-173. Highly expressed in flowers, and at lower levels in rosettes leaves and cauline leaves.

The protein resides in the cytoplasm. It is found in the cytosol. It carries out the reaction beta-D-fructose 1,6-bisphosphate = D-glyceraldehyde 3-phosphate + dihydroxyacetone phosphate. The protein operates within carbohydrate degradation; glycolysis; D-glyceraldehyde 3-phosphate and glycerone phosphate from D-glucose: step 4/4. Its function is as follows. Plays a key role in glycolysis and gluconeogenesis. This Arabidopsis thaliana (Mouse-ear cress) protein is Fructose-bisphosphate aldolase 7, cytosolic.